The sequence spans 162 residues: Ubiquitin D (162 aa).

Ubiquitin-like domains lie at 3 to 78 and 87 to 160; these read SVRT…LKVV and LFLV…THCT.

Belongs to the ubiquitin D family. As to quaternary structure, interacts directly with the 26S proteasome. Interacts with NUB1; this interaction facilitates the linking of UBD-conjugated target protein to the proteasome complex and accelerates its own degradation and that of its conjugates. Interacts (via ubiquitin-like 1 domain) with the spindle checkpoint protein MAD2L1 during mitosis. Present in aggresomes of proteasome inhibited cells. Interacts with HDAC6 under proteasome impairment conditions. Forms a thioester with UBA6 in cells stimulated with tumor necrosis factor-alpha (TNFa) and interferon-gamma (IFNg). Interacts with SQSTM1 and TP53/p53. Can be acetylated. Mostly expressed in thymus and intestine.

It is found in the nucleus. The protein localises to the cytoplasm. Its function is as follows. Ubiquitin-like protein modifier which can be covalently attached to target proteins and subsequently leads to their degradation by the 26S proteasome, in a NUB1-dependent manner. Conjugation to the target protein is activated by UBA6 via adenylation of its C-terminal glycine. Probably functions as a survival factor. Promotes the expression of the proteasome subunit beta type-9 (PSMB9/LMP2). Regulates TNF-alpha-induced and LPS-mediated activation of the central mediator of innate immunity NF-kappa-B by promoting TNF-alpha-mediated proteasomal degradation of ubiquitinated-I-kappa-B-alpha. Required for TNF-alpha-induced p65 nuclear translocation in renal tubular epithelial cells (RTECs). May be involved in dendritic cell (DC) maturation, the process by which immature dendritic cells differentiate into fully competent antigen-presenting cells that initiate T-cell responses. Mediates mitotic non-disjunction and chromosome instability, in long-term in vitro culture and cancers, by abbreviating mitotic phase and impairing the kinetochore localization of MAD2L1 during the prometaphase stage of the cell cycle. May be involved in the formation of aggresomes when proteasome is saturated or impaired. Mediates apoptosis in a caspase-dependent manner, especially in renal epithelium and tubular cells during renal diseases. This chain is Ubiquitin D (Ubd), found in Mus musculus (Mouse).